Consider the following 233-residue polypeptide: Large ribosomal subunit protein uL1 (233 aa).

It belongs to the universal ribosomal protein uL1 family. Part of the 50S ribosomal subunit.

Binds directly to 23S rRNA. The L1 stalk is quite mobile in the ribosome, and is involved in E site tRNA release. In terms of biological role, protein L1 is also a translational repressor protein, it controls the translation of the L11 operon by binding to its mRNA. In Finegoldia magna (strain ATCC 29328 / DSM 20472 / WAL 2508) (Peptostreptococcus magnus), this protein is Large ribosomal subunit protein uL1.